Consider the following 62-residue polypeptide: Potassium channel toxin alpha-KTx Tx773 (62 aa).

The N-terminal stretch at 1 to 18 (MQKLFIVLLLFCILRLDA) is a signal peptide. Cystine bridges form between cysteine 28–cysteine 46, cysteine 33–cysteine 59, and cysteine 37–cysteine 61.

The protein belongs to the short scorpion toxin superfamily. Potassium channel inhibitor family. Alpha-KTx 23 subfamily. Expressed by the venom gland.

The protein localises to the secreted. Functionally, may block potassium channels. The sequence is that of Potassium channel toxin alpha-KTx Tx773 from Buthus israelis (Israeli scorpion).